Here is a 397-residue protein sequence, read N- to C-terminus: Cytochrome b (397 aa).

Helical transmembrane passes span 48 to 68, 92 to 113, 128 to 148, and 193 to 213; these read FGSM…LLSA, WMLR…YAHI, WYFG…GYTL, and FYTL…LHLF. 2 residues coordinate heme b: histidine 98 and histidine 112. Histidine 197 and histidine 211 together coordinate heme b. Histidine 216 is an a ubiquinone binding site. 4 consecutive transmembrane segments (helical) span residues 241-261, 303-323, 335-355, and 362-382; these read IKDL…VCVD, AGGV…PTLH, LNQV…WIGA, and YIIL…WTPF.

It belongs to the cytochrome b family. As to quaternary structure, the main subunits of complex b-c1 are: cytochrome b, cytochrome c1 and the Rieske protein. Heme b serves as cofactor.

Its subcellular location is the mitochondrion inner membrane. In terms of biological role, component of the ubiquinol-cytochrome c reductase complex (complex III or cytochrome b-c1 complex) that is part of the mitochondrial respiratory chain. The b-c1 complex mediates electron transfer from ubiquinol to cytochrome c. Contributes to the generation of a proton gradient across the mitochondrial membrane that is then used for ATP synthesis. In Mytilus edulis (Blue mussel), this protein is Cytochrome b (MT-CYB).